A 316-amino-acid polypeptide reads, in one-letter code: Ornithine carbamoyltransferase (316 aa).

Carbamoyl phosphate is bound by residues 57–60 (STRT), Q84, R108, and 135–138 (HPCQ). Residues N166, D230, and 234–235 (SM) each bind L-ornithine. Residues 269-270 (CL) and R297 each bind carbamoyl phosphate.

Belongs to the aspartate/ornithine carbamoyltransferase superfamily. OTCase family.

The protein localises to the cytoplasm. The catalysed reaction is carbamoyl phosphate + L-ornithine = L-citrulline + phosphate + H(+). The protein operates within amino-acid biosynthesis; L-arginine biosynthesis; L-arginine from L-ornithine and carbamoyl phosphate: step 1/3. Reversibly catalyzes the transfer of the carbamoyl group from carbamoyl phosphate (CP) to the N(epsilon) atom of ornithine (ORN) to produce L-citrulline. The polypeptide is Ornithine carbamoyltransferase (argF) (Bacillus cereus (strain ATCC 14579 / DSM 31 / CCUG 7414 / JCM 2152 / NBRC 15305 / NCIMB 9373 / NCTC 2599 / NRRL B-3711)).